Here is a 488-residue protein sequence, read N- to C-terminus: Nitrogen metabolite repression protein nmr (488 aa).

The disordered stretch occupies residues 1-45; that stretch reads MPAEILSELPLRPAPRDIKIPNAMHNEERRHKHSRSSYSEMSPLM. The span at 14–29 shows a compositional bias: basic and acidic residues; that stretch reads APRDIKIPNAMHNEER. The segment covering 36–45 has biased composition (polar residues); that stretch reads SSYSEMSPLM. NADP(+) contacts are provided by residues 71 to 76, Asn-165, Lys-215, and 237 to 240; these read NAAGRQ and YNNN. NAD(+) contacts are provided by residues 75–76, 165–167, Lys-215, and 237–240; these read RQ, NTT, and YNNN. The dispensable for NMR function stretch occupies residues 412–488; it reads EEYDGGGGNN…NKRADEEWLA (77 aa). The tract at residues 422 to 488 is disordered; it reads IGNNHNNHHQ…NKRADEEWLA (67 aa). Low complexity predominate over residues 438–459; the sequence is HQNGHQNGHNGINGHIVNGGVD. A compositionally biased stretch (acidic residues) spans 460–473; that stretch reads SESEEEDSDSDDEG.

The protein belongs to the NmrA-type oxidoreductase family. Interacts with nit-2.

The protein resides in the nucleus. May be a redox sensor protein. Negative transcriptional regulator involved in the post-transcriptional modulation of the GATA-type transcription factor nit-2, forming part of a system controlling nitrogen metabolite repression. The protein is Nitrogen metabolite repression protein nmr (nmr) of Neurospora crassa (strain ATCC 24698 / 74-OR23-1A / CBS 708.71 / DSM 1257 / FGSC 987).